The chain runs to 393 residues: Probable acetyl-CoA acyltransferase (393 aa).

The active-site Acyl-thioester intermediate is Cys88. Active-site proton acceptor residues include His349 and Cys378.

The protein belongs to the thiolase-like superfamily. Thiolase family.

It is found in the cytoplasm. It catalyses the reaction 2 acetyl-CoA = acetoacetyl-CoA + CoA. This is Probable acetyl-CoA acyltransferase from Staphylococcus aureus (strain Mu50 / ATCC 700699).